A 289-amino-acid chain; its full sequence is Phytoene synthase (289 aa).

Belongs to the phytoene/squalene synthase family. Requires ATP as cofactor. Mn(2+) serves as cofactor. The cofactor is Mg(2+).

Its pathway is carotenoid biosynthesis; phytoene biosynthesis. Functionally, involved in the biosynthesis of carotenoids. Catalyzes the condensation of two molecules of geranylgeranyl diphosphate (GGPP) to give prephytoene diphosphate (PPPP) and the subsequent rearrangement of the cyclopropylcarbinyl intermediate to yield phytoene. This is Phytoene synthase (crtB) from Thermus thermophilus (strain ATCC BAA-163 / DSM 7039 / HB27).